The following is a 1012-amino-acid chain: Roundabout homolog 4 (1012 aa).

An N-terminal signal peptide occupies residues 1 to 27 (MGSGGTGLLGTEWPLPLLLLFIMGGEA). 2 consecutive Ig-like C2-type domains span residues 32–132 (PQIL…ARLS) and 138–225 (EDFQ…ARVS). 2 disulfide bridges follow: cysteine 53–cysteine 115 and cysteine 159–cysteine 208. Asparagine 201 and asparagine 247 each carry an N-linked (GlcNAc...) asparagine glycan. 2 Fibronectin type-III domains span residues 249 to 346 (TLLN…LPEQ) and 348 to 443 (PSAP…LEQA). N-linked (GlcNAc...) asparagine glycans are attached at residues asparagine 361, asparagine 390, and asparagine 397. Disordered regions lie at residues 533–553 (TSGS…GLDP) and 586–616 (LIAE…AGTS). Positions 534 to 550 (SGSRDLSSSSSLSSRLG) are enriched in low complexity. Residues 592-601 (SSPPVRPSPK) are compositionally biased toward pro residues. N-linked (GlcNAc...) asparagine glycans are attached at residues asparagine 681 and asparagine 713. The interval 711–801 (HRNSSELASR…LEEEEDQDSV (91 aa)) is disordered. Residues 745-759 (LQAPSSDPLPAAPLS) are compositionally biased toward low complexity. The segment covering 760 to 771 (VLNSSRPSSPQA) has biased composition (polar residues). N-linked (GlcNAc...) asparagine glycans are attached at residues asparagine 762 and asparagine 783. A compositionally biased stretch (low complexity) spans 772–791 (SFLSCPSPSSSNLSSSSLSS). Phosphoserine is present on residues serine 814 and serine 947. Residues 980-1012 (RLGRGLPPWPPDSRASSQRSWLTGAVPKAGDSS) are disordered.

It belongs to the immunoglobulin superfamily. ROBO family. Interacts with SLIT2 and ENAH. As to expression, expressed specifically in embryo and adult vascular endothelium.

Its function is as follows. Receptor for Slit proteins, at least for SLIT2, and seems to be involved in angiogenesis and vascular patterning. May mediate the inhibition of primary endothelial cell migration by Slit proteins. Involved in the maintenance of endothelial barrier organization and function. This chain is Roundabout homolog 4 (Robo4), found in Mus musculus (Mouse).